A 659-amino-acid polypeptide reads, in one-letter code: Threonine--tRNA ligase (659 aa).

Residues 1-60 (MTVYLPDGKPLELPEGATAKDVARALGEGWERRAVGAIVDGELYDLLKPLPQGAKVRLLT) form the TGS domain. Catalytic regions lie at residues 234-548 (TAEE…EHFA) and 252-552 (DHRR…GDFP). Zn(2+)-binding residues include cysteine 349, histidine 400, and histidine 529.

Belongs to the class-II aminoacyl-tRNA synthetase family. Homodimer. Requires Zn(2+) as cofactor.

The protein localises to the cytoplasm. The enzyme catalyses tRNA(Thr) + L-threonine + ATP = L-threonyl-tRNA(Thr) + AMP + diphosphate + H(+). In terms of biological role, catalyzes the attachment of threonine to tRNA(Thr) in a two-step reaction: L-threonine is first activated by ATP to form Thr-AMP and then transferred to the acceptor end of tRNA(Thr). Also edits incorrectly charged L-seryl-tRNA(Thr). This Thermus thermophilus (strain ATCC 27634 / DSM 579 / HB8) protein is Threonine--tRNA ligase.